The following is a 361-amino-acid chain: Adenosine kinase (361 aa).

Positions Pro-7–Glu-15 match the Nuclear localization signal motif. Residue Asp-34 participates in adenosine binding. Position 48 (Ser-48) interacts with Mg(2+). Tyr-76 bears the Phosphotyrosine mark. Residue Asn-147 participates in Mg(2+) binding. An adenosine-binding site is contributed by Gln-305. Residue Asp-316 is part of the active site. Asp-316 functions as the Proton acceptor in the catalytic mechanism.

This sequence belongs to the carbohydrate kinase PfkB family. As to quaternary structure, monomer. Requires Mg(2+) as cofactor.

It is found in the nucleus. It carries out the reaction adenosine + ATP = AMP + ADP + H(+). It functions in the pathway purine metabolism; AMP biosynthesis via salvage pathway; AMP from adenosine: step 1/1. Functionally, catalyzes the phosphorylation of the purine nucleoside adenosine at the 5' position in an ATP-dependent manner. Serves as a potential regulator of concentrations of extracellular adenosine and intracellular adenine nucleotides. In Rattus norvegicus (Rat), this protein is Adenosine kinase (Adk).